We begin with the raw amino-acid sequence, 180 residues long: Cytidylate kinase (180 aa).

ATP is bound at residue 7-15 (GPPGSGTTT).

It belongs to the cytidylate kinase family. Type 2 subfamily.

The protein resides in the cytoplasm. The enzyme catalyses CMP + ATP = CDP + ADP. The catalysed reaction is dCMP + ATP = dCDP + ADP. The polypeptide is Cytidylate kinase (cmk) (Archaeoglobus fulgidus (strain ATCC 49558 / DSM 4304 / JCM 9628 / NBRC 100126 / VC-16)).